We begin with the raw amino-acid sequence, 458 residues long: Elongation factor 1-alpha 1 (458 aa).

Position 2 is a n,N,N-trimethylglycine (Gly2). Lys3 carries the N6,N6-dimethyllysine; alternate modification. At Lys3 the chain carries N6-methyllysine; alternate. The 236-residue stretch at 5–240 (KTHVNVVVIG…DAIEPPTRPT (236 aa)) folds into the tr-type G domain. Residues 14 to 21 (GHVDSGKS) are G1. Residue 14–21 (GHVDSGKS) participates in GTP binding. Lys30 carries the post-translational modification N6-methyllysine. The interval 70-74 (GITID) is G2. Lys79 is modified (N6,N6,N6-trimethyllysine). Residues 91-94 (DAPG) form a G3 region. Residues 91-95 (DAPGH) and 153-156 (NKMD) each bind GTP. Residues 153-156 (NKMD) form a G4 region. The tract at residues 192 to 194 (SGW) is G5. Lys316 carries the post-translational modification N6,N6-dimethyllysine; alternate. An N6-methyllysine; alternate modification is found at Lys316. N6-methyllysine is present on Lys390.

Belongs to the TRAFAC class translation factor GTPase superfamily. Classic translation factor GTPase family. EF-Tu/EF-1A subfamily.

The protein localises to the cytoplasm. In terms of biological role, this protein promotes the GTP-dependent binding of aminoacyl-tRNA to the A-site of ribosomes during protein biosynthesis. This Candida albicans (strain SC5314 / ATCC MYA-2876) (Yeast) protein is Elongation factor 1-alpha 1 (TEF1).